The following is a 201-amino-acid chain: dITP/XTP pyrophosphatase (201 aa).

8 to 13 (TTNENK) provides a ligand contact to substrate. Residue D68 is the Proton acceptor of the active site. D68 contacts Mg(2+). Residues S69, 155-158 (FGYD), K177, and 182-183 (HR) contribute to the substrate site.

It belongs to the HAM1 NTPase family. As to quaternary structure, homodimer. The cofactor is Mg(2+).

The catalysed reaction is XTP + H2O = XMP + diphosphate + H(+). It catalyses the reaction dITP + H2O = dIMP + diphosphate + H(+). The enzyme catalyses ITP + H2O = IMP + diphosphate + H(+). In terms of biological role, pyrophosphatase that catalyzes the hydrolysis of nucleoside triphosphates to their monophosphate derivatives, with a high preference for the non-canonical purine nucleotides XTP (xanthosine triphosphate), dITP (deoxyinosine triphosphate) and ITP. Seems to function as a house-cleaning enzyme that removes non-canonical purine nucleotides from the nucleotide pool, thus preventing their incorporation into DNA/RNA and avoiding chromosomal lesions. In Borreliella burgdorferi (strain ATCC 35210 / DSM 4680 / CIP 102532 / B31) (Borrelia burgdorferi), this protein is dITP/XTP pyrophosphatase.